The chain runs to 200 residues: MLPANRAEHSSDAEPRDIGSHGRNHGGCYSSDCKLGLLVDISNVVSPLPLDLTWSSWETTSQPARSRSYLNTRTYTIRACCDLQTRLHAFFIGVFEKRDPEKQILLPDLTNFKCILNNPRIMQELATEHSVCSAPFSAATQYDCDEDGEESTINGLCFHCHCKTPFSLECWQAANSAQAKILSVARGITSAKERQRENKR.

Positions 1-20 (MLPANRAEHSSDAEPRDIGS) are enriched in basic and acidic residues. The tract at residues 1-23 (MLPANRAEHSSDAEPRDIGSHGR) is disordered.

This sequence belongs to the alphaherpesvirinae HHV-1 UL55 family.

The protein resides in the virion tegument. The protein localises to the host nucleus matrix. The polypeptide is Tegument protein UL55 homolog (Equine herpesvirus 1 (strain Ab4p) (EHV-1)).